A 315-amino-acid chain; its full sequence is Malate dehydrogenase (315 aa).

An NAD(+)-binding site is contributed by Gly-9–Gly-15. Arg-84 and Arg-90 together coordinate substrate. NAD(+)-binding positions include Asn-97 and Val-120–Asn-122. 2 residues coordinate substrate: Asn-122 and Arg-153. The active-site Proton acceptor is the His-177.

This sequence belongs to the LDH/MDH superfamily.

It carries out the reaction (S)-malate + NAD(+) = oxaloacetate + NADH + H(+). In terms of biological role, catalyzes the reversible oxidation of malate to oxaloacetate. In Helicobacter hepaticus (strain ATCC 51449 / 3B1), this protein is Malate dehydrogenase.